A 204-amino-acid chain; its full sequence is MDRVLLLLSVLSLGVSSQPITDSQRLFSIAVSRVQHLHLLAQRLFSDFESSLQTEEQRQLNKIFLQDFCNSDYIISPIDKHETQRSSVLKLLSISYRLVESWEFPSRSLSGGSAPRNQISPKLSDLKTGILLLIRANQDGAEIFPDSSTLQLAPYGNYYQSLSGDESLRRTYELLACFKKDMHKVETYLTVAKCRLSPEANCTL.

Positions 1–17 (MDRVLLLLSVLSLGVSS) are cleaved as a signal peptide. Glutamine 18 is modified (pyrrolidone carboxylic acid). Histidine 36 contributes to the Zn(2+) binding site. Cysteines 69 and 177 form a disulfide. Glutamate 186 lines the Zn(2+) pocket. Cysteine 194 and cysteine 202 are disulfide-bonded.

Belongs to the somatotropin/prolactin family.

It localises to the secreted. Functionally, growth hormone plays an important role in growth control and is involved in the regulation of several anabolic processes. Implicated as an osmoregulatory substance important for seawater adaptation. In Sciaenops ocellatus (Red drum), this protein is Somatotropin (gh).